The primary structure comprises 149 residues: Deoxyuridine 5'-triphosphate nucleotidohydrolase (149 aa).

Substrate is bound by residues 68-70 (RSG), asparagine 81, 85-87 (LID), and methionine 95.

This sequence belongs to the dUTPase family. Mg(2+) is required as a cofactor.

The enzyme catalyses dUTP + H2O = dUMP + diphosphate + H(+). It participates in pyrimidine metabolism; dUMP biosynthesis; dUMP from dCTP (dUTP route): step 2/2. In terms of biological role, this enzyme is involved in nucleotide metabolism: it produces dUMP, the immediate precursor of thymidine nucleotides and it decreases the intracellular concentration of dUTP so that uracil cannot be incorporated into DNA. This chain is Deoxyuridine 5'-triphosphate nucleotidohydrolase, found in Methylibium petroleiphilum (strain ATCC BAA-1232 / LMG 22953 / PM1).